The chain runs to 339 residues: DNA-directed RNA polymerase subunit alpha (339 aa).

An alpha N-terminal domain (alpha-NTD) region spans residues 1–235; that stretch reads MTIQKNWQEL…DQLNVFVNFE (235 aa). The tract at residues 251 to 339 is alpha C-terminal domain (alpha-CTD); that stretch reads FNPAFLKKVD…ELAKRFEDHY (89 aa).

Belongs to the RNA polymerase alpha chain family. As to quaternary structure, homodimer. The RNAP catalytic core consists of 2 alpha, 1 beta, 1 beta' and 1 omega subunit. When a sigma factor is associated with the core the holoenzyme is formed, which can initiate transcription.

The enzyme catalyses RNA(n) + a ribonucleoside 5'-triphosphate = RNA(n+1) + diphosphate. In terms of biological role, DNA-dependent RNA polymerase catalyzes the transcription of DNA into RNA using the four ribonucleoside triphosphates as substrates. The protein is DNA-directed RNA polymerase subunit alpha of Rhodopseudomonas palustris (strain BisA53).